We begin with the raw amino-acid sequence, 708 residues long: FACT complex subunit SSRP1 (708 aa).

An N-acetylalanine modification is found at Ala-2. A Glycyl lysine isopeptide (Lys-Gly) (interchain with G-Cter in SUMO2) cross-link involves residue Lys-90. At Thr-170 the chain carries Phosphothreonine. Lys-233 carries the post-translational modification N6-acetyllysine. Glycyl lysine isopeptide (Lys-Gly) (interchain with G-Cter in SUMO2) cross-links involve residues Lys-296 and Lys-364. Lys-413 is modified (N6-acetyllysine). Tyr-441 bears the Phosphotyrosine mark. Ser-444 is modified (phosphoserine). Tyr-452 bears the Phosphotyrosine mark. Positions 458–708 (EEGKIREENA…SEDSASGSDE (251 aa)) are disordered. Acidic residues predominate over residues 470–496 (SSDDSGEETDESFNPGEEEEDVAEEFD). Phosphoserine is present on Ser-471. Low complexity predominate over residues 497–507 (SNASASSSSNE). Residue Ser-510 is modified to Phosphoserine; by CK2. Basic and acidic residues-rich tracts occupy residues 512-546 (REEK…DPNA) and 577-624 (LSKK…SSKR). Residue Lys-542 is modified to N6-acetyllysine. Residues 547–615 (PKRPMSAYML…EYEKAMKEYE (69 aa)) constitute a DNA-binding region (HMG box). Positions 625–634 (DKSKKKKKVK) are enriched in basic residues. Over residues 643 to 659 (PSRGSSSKSSSRQLSDS) the composition is skewed to low complexity. Residue Ser-657 is modified to Phosphoserine; by CK2. A phosphoserine mark is found at Ser-659, Ser-667, Ser-668, Ser-671, Ser-672, and Ser-673. Ser-688 carries the phosphoserine; by CK2 modification. Polar residues predominate over residues 695 to 708 (TPPSSEDSASGSDE).

This sequence belongs to the SSRP1 family. Interacts with MYOG (via C-terminal region). Component of the FACT complex, a stable heterodimer of SSRP1 and SUPT16H. Also a component of a CK2-SPT16-SSRP1 complex which forms following UV irradiation, composed of SSRP1, SUPT16H, CSNK2A1, CSNK2A2 and CSNK2B. Binds to histone H3-H4 tetramers, but not to intact nucleosomes. Identified in a centromere complex containing histones H2A, H2B and H4, and at least CENPA, CENPB, CENPC, CENPT, CENPN, HJURP, SUPT16H, SSRP1 and RSF1. Interacts with isoform gamma of TP63. Interacts with FYTTD1/UIF. Interacts with SRF. Interacts with NEK9. Post-translationally, phosphorylated by CK2 following UV but not gamma irradiation. Phosphorylation inhibits its DNA-binding activity. Ubiquitinated. Polyubiquitinated following caspase cleavage resulting in degradation of the N-terminal ubiquitinated part of the cleaved protein. In terms of processing, sumoylated.

The protein localises to the nucleus. The protein resides in the chromosome. It is found in the nucleolus. Functionally, component of the FACT complex, a general chromatin factor that acts to reorganize nucleosomes. The FACT complex is involved in multiple processes that require DNA as a template such as mRNA elongation, DNA replication and DNA repair. During transcription elongation the FACT complex acts as a histone chaperone that both destabilizes and restores nucleosomal structure. It facilitates the passage of RNA polymerase II and transcription by promoting the dissociation of one histone H2A-H2B dimer from the nucleosome, then subsequently promotes the reestablishment of the nucleosome following the passage of RNA polymerase II. The FACT complex is probably also involved in phosphorylation of 'Ser-392' of p53/TP53 via its association with CK2 (casein kinase II). Binds specifically to double-stranded DNA. Also acts as a transcriptional coactivator for p63/TP63. The protein is FACT complex subunit SSRP1 (Ssrp1) of Mus musculus (Mouse).